The primary structure comprises 302 residues: Tegument protein VP22 (302 aa).

Basic and acidic residues predominate over residues 1 to 10 (MASSDGDRLC). 2 disordered regions span residues 1–42 (MASS…PDDS) and 125–167 (SFTK…TATS). The tract at residues 154–244 (RPISFSTAPK…ANEADLGEGA (91 aa)) is interaction with gE. The span at 157-167 (SFSTAPKTATS) shows a compositional bias: polar residues. A Nuclear export signal motif is present at residues 212–224 (LDRLLTGAVIRIT). A disordered region spans residues 243–302 (GASVSKRGHNRKTGDLQGGMGNEPMYAQVRKPKSRTDTQTTGRITNRSRARSASRTDARK).

Belongs to the alphaherpesvirinae VP22 tegument protein family. Interacts with gE (via C-terminus); this interaction is necessary for the recruitment of VP22/ORF9 to the Golgi and its packaging into virions. Interacts with gM (via C-terminus). Interacts with VP16/ORF10; this interaction allows the formation of a tripartite complex composed of VP16/ORF10, VP22/ORF9 and VHS/ORF17. Interacts with the capsid-binding protein ORF44. Interacts with host CGAS. Highly phosphorylated in the host cell. Packaging is selective for underphosphorylated forms.

It is found in the virion tegument. The protein localises to the host cytoplasm. The protein resides in the host nucleus. Its subcellular location is the host Golgi apparatus. In terms of biological role, tegument protein that plays different roles during the time course of infection. Participates in both the accumulation of viral mRNAs and viral protein translation at late time of infection. Modulates the RNase activity of the virion host shutoff protein ORF17 probably to ensure necessary levels of key cellular mRNAs and proteins. Plays a role in microtubule reorganization that occurs after viral infection by stabilizing microtubule network. Plays a role in the inhibition of host innate immune system by targeting the CGAS enzymatic activity which is the principal cytosolic DNA sensor that detects invading viral DNA. Acts by mediating disruption of liquid-like droplets in which CGAS is activated, thereby preventing CGAS activity. The sequence is that of Tegument protein VP22 from Varicella-zoster virus (strain Oka vaccine) (HHV-3).